The sequence spans 268 residues: Type III pantothenate kinase (268 aa).

ATP is bound at residue 6–13 (DVGNTNIV). Substrate contacts are provided by residues Tyr100 and 107–110 (GADR). Residue Asp109 is the Proton acceptor of the active site. K(+) is bound at residue Asp129. Residue Thr132 participates in ATP binding. Substrate is bound at residue Thr184.

The protein belongs to the type III pantothenate kinase family. In terms of assembly, homodimer. Requires NH4(+) as cofactor. K(+) is required as a cofactor.

It is found in the cytoplasm. It carries out the reaction (R)-pantothenate + ATP = (R)-4'-phosphopantothenate + ADP + H(+). It participates in cofactor biosynthesis; coenzyme A biosynthesis; CoA from (R)-pantothenate: step 1/5. In terms of biological role, catalyzes the phosphorylation of pantothenate (Pan), the first step in CoA biosynthesis. The chain is Type III pantothenate kinase from Alkaliphilus metalliredigens (strain QYMF).